The chain runs to 180 residues: Large ribosomal subunit protein uL5 (180 aa).

This sequence belongs to the universal ribosomal protein uL5 family. In terms of assembly, part of the 50S ribosomal subunit; part of the 5S rRNA/L5/L18/L25 subcomplex. Contacts the 5S rRNA and the P site tRNA. Forms a bridge to the 30S subunit in the 70S ribosome.

In terms of biological role, this is one of the proteins that bind and probably mediate the attachment of the 5S RNA into the large ribosomal subunit, where it forms part of the central protuberance. In the 70S ribosome it contacts protein S13 of the 30S subunit (bridge B1b), connecting the 2 subunits; this bridge is implicated in subunit movement. Contacts the P site tRNA; the 5S rRNA and some of its associated proteins might help stabilize positioning of ribosome-bound tRNAs. In Oenococcus oeni (strain ATCC BAA-331 / PSU-1), this protein is Large ribosomal subunit protein uL5.